We begin with the raw amino-acid sequence, 99 residues long: Small ribosomal subunit protein bS20 (99 aa).

It belongs to the bacterial ribosomal protein bS20 family.

Its function is as follows. Binds directly to 16S ribosomal RNA. The polypeptide is Small ribosomal subunit protein bS20 (Chlamydia pneumoniae (Chlamydophila pneumoniae)).